A 312-amino-acid polypeptide reads, in one-letter code: MRRKMKLWRRVSGAIKDKLSLITATDEKFTAAVIKATSHNDVSMDIENVQFIYRYIQSNPSSFKPIIRAVSLRVEHTRNWTVALKCLMLLHGLFFSGIMTVDSIGRLPFDLSGFGRRKSRFSRTGRFNIFVRAYFMFLDERSILYYNKNMIRLEIIVKMQRIVDSLMRIKPIGETPLVIEAMEYVISEVVLINGHICRGFAGFLSDVQSNMLEISSAEADLAMNIVAKSLSQREKLFKYFEFCRGFGVTNAQETSNILRITESQMIVLDKLLHIAPELDWKAAKVTPVTAADMVDLVTSEERSNTPSDFLTF.

Residues 21-152 enclose the ENTH domain; the sequence is LITATDEKFT…ILYYNKNMIR (132 aa).

It localises to the membrane. Its subcellular location is the clathrin-coated pit. The protein localises to the golgi apparatus. The protein resides in the cytoplasmic vesicle. It is found in the clathrin-coated vesicle. The polypeptide is Putative clathrin assembly protein At2g01920 (Arabidopsis thaliana (Mouse-ear cress)).